Consider the following 77-residue polypeptide: uncharacterized protein (77 aa).

In terms of biological role, putative sugar-binding regulatory protein for the alpha-amylase gene. This is an uncharacterized protein from Streptomyces violaceus (Streptomyces venezuelae).